The following is a 249-amino-acid chain: DNA repair protein RecO (249 aa).

Belongs to the RecO family.

Functionally, involved in DNA repair and RecF pathway recombination. The sequence is that of DNA repair protein RecO from Lactobacillus delbrueckii subsp. bulgaricus (strain ATCC BAA-365 / Lb-18).